A 79-amino-acid polypeptide reads, in one-letter code: Acyl carrier protein (79 aa).

Positions 2-77 (SEIGERVKKI…DATKFLEKNA (76 aa)) constitute a Carrier domain. The residue at position 37 (S37) is an O-(pantetheine 4'-phosphoryl)serine.

The protein belongs to the acyl carrier protein (ACP) family. Post-translationally, 4'-phosphopantetheine is transferred from CoA to a specific serine of apo-ACP by AcpS. This modification is essential for activity because fatty acids are bound in thioester linkage to the sulfhydryl of the prosthetic group.

It is found in the cytoplasm. The protein operates within lipid metabolism; fatty acid biosynthesis. Its function is as follows. Carrier of the growing fatty acid chain in fatty acid biosynthesis. This chain is Acyl carrier protein, found in Afipia carboxidovorans (strain ATCC 49405 / DSM 1227 / KCTC 32145 / OM5) (Oligotropha carboxidovorans).